The chain runs to 332 residues: MLLVVAAFIVAFVLLLYMISPLISPKPLKLNGAHVVVTGGSSGIGKCIAMECYKHGAFITLVARDEHKLVQAKKEVEKFAINDKQVVLCISVDVAKDYSQVESVIKQAQEKLGPVDMLVNCAGTSLSGKFEEVEVDHFKKMMEVNYLGSVYPTRAVITTMKERRMGRIMFVSSQAGQIGLFGYTAYSPSKFALRGLAEALQMEMKPYNIYVTVAYPPDTDTPGFAEENKTKPLETKLISETSGVSQPEQVAKIVVKDAVQGNFTSSFGPDGYMLSALTCGMSPVTSITEGLQQIVTMGLFRTIALFYLGSFDSIVRRCMIQREQCKAADKRE.

The first 25 residues, 1–25 (MLLVVAAFIVAFVLLLYMISPLISP), serve as a signal peptide directing secretion. Positions 39, 41, 42, 43, 64, 65, 68, and 93 each coordinate NADPH. Residues 39 to 43 (GGSSG) carry the GXSXG motif. The active-site Proton donor is Ser-172. Tyr-186 (proton acceptor) is an active-site residue. Residues Tyr-186 and Lys-190 each coordinate NADP(+). Lys-190 (lowers pKa of active site Tyr) is an active-site residue.

This sequence belongs to the short-chain dehydrogenases/reductases (SDR) family.

The protein localises to the endoplasmic reticulum. The enzyme catalyses sphinganine + NADP(+) = 3-oxosphinganine + NADPH + H(+). Its pathway is lipid metabolism; sphingolipid metabolism. Catalyzes the reduction of 3'-oxosphinganine (3-ketodihydrosphingosine/KDS) to sphinganine (dihydrosphingosine/DHS), the second step of de novo sphingolipid biosynthesis. This is 3-dehydrosphinganine reductase (kdsr) from Danio rerio (Zebrafish).